A 164-amino-acid chain; its full sequence is Phosphopantetheine adenylyltransferase (164 aa).

Ser9 contacts substrate. ATP contacts are provided by residues 9–10 and His17; that span reads SF. Substrate-binding residues include Lys41, Val78, and Arg92. ATP-binding positions include 93 to 95, Glu103, and 128 to 134; these read GLR and VRTITAT.

This sequence belongs to the bacterial CoaD family. As to quaternary structure, homohexamer. Requires Mg(2+) as cofactor.

The protein localises to the cytoplasm. It carries out the reaction (R)-4'-phosphopantetheine + ATP + H(+) = 3'-dephospho-CoA + diphosphate. Its pathway is cofactor biosynthesis; coenzyme A biosynthesis; CoA from (R)-pantothenate: step 4/5. Its function is as follows. Reversibly transfers an adenylyl group from ATP to 4'-phosphopantetheine, yielding dephospho-CoA (dPCoA) and pyrophosphate. The polypeptide is Phosphopantetheine adenylyltransferase (Brucella abortus (strain 2308)).